A 557-amino-acid polypeptide reads, in one-letter code: Protein Red (557 aa).

The segment at 1–84 (MPERDSEPFS…RKKKSYYAKL (84 aa)) is disordered. Residues 16–25 (DGHDVDDPHS) are compositionally biased toward basic and acidic residues. Over residues 42-53 (TPRAAPTSAPPS) the composition is skewed to low complexity. Residues K98 and K137 each carry the N6-acetyllysine modification. K151 participates in a covalent cross-link: Glycyl lysine isopeptide (Lys-Gly) (interchain with G-Cter in SUMO2). A disordered region spans residues 181 to 205 (KEKEEEELMEKPQKETKKDEDPENK). S287 is modified (phosphoserine). A compositionally biased stretch (basic residues) spans 294-303 (RNKKLKKKDK). The tract at residues 294–402 (RNKKLKKKDK…PIDVDKGPGS (109 aa)) is disordered. Over residues 304–313 (GKLEEKKPPE) the composition is skewed to basic and acidic residues. Residues K310 and K331 each participate in a glycyl lysine isopeptide (Lys-Gly) (interchain with G-Cter in SUMO2) cross-link. Basic and acidic residues predominate over residues 332 to 398 (TPRDKERERY…VDDEPIDVDK (67 aa)). Repeat copies occupy residues 342 to 343 (RE), 344 to 345 (RE), 346 to 347 (RD), 348 to 349 (RE), 350 to 351 (RD), 352 to 353 (RD), 354 to 355 (RD), 356 to 357 (RE), 358 to 359 (RE), 360 to 361 (RE), 362 to 363 (RD), 364 to 365 (RE), 366 to 367 (RE), 368 to 369 (RE), 370 to 371 (RD), 372 to 373 (RE), and 374 to 375 (RE). The segment at 342–375 (RERERDRERDRDRDRERERERDRERERERDRERE) is 17 X 2 AA tandem repeats of R-[ED]. Glycyl lysine isopeptide (Lys-Gly) (interchain with G-Cter in SUMO2) cross-links involve residues K386, K388, K404, and K408. S417 and S460 each carry phosphoserine. T485 carries the post-translational modification Phosphothreonine. Residues K496, K501, and K509 each participate in a glycyl lysine isopeptide (Lys-Gly) (interchain with G-Cter in SUMO2) cross-link. A Phosphoserine modification is found at S536. Residues K541, K543, K544, and K553 each participate in a glycyl lysine isopeptide (Lys-Gly) (interchain with G-Cter in SUMO2) cross-link.

This sequence belongs to the RED family. Component of the spliceosome B complex. Interacts with SMU1. Interacts with MAD1L1. May interact with DHX15.

It localises to the nucleus. Its subcellular location is the nucleoplasm. The protein localises to the chromosome. It is found in the cytoplasm. The protein resides in the cytoskeleton. It localises to the spindle pole. Functionally, involved in pre-mRNA splicing as a component of the spliceosome. Auxiliary spliceosomal protein that regulates selection of alternative splice sites in a small set of target pre-mRNA species. Required for normal mitotic cell cycle progression. Recruits MAD1L1 and MAD2L1 to kinetochores, and is required to trigger the spindle assembly checkpoint. Required for normal accumulation of SMU1. This is Protein Red (IK) from Pongo abelii (Sumatran orangutan).